A 391-amino-acid chain; its full sequence is MTAPQTPSSNFLWFLPTHGDGHYLGTSNGGRDVNFGYLRQIAQAADQLGYFGVLLPTGRSCEDSWVVASAVAPWTERLRYLVAVRPGLQSPSVAARMTATLDRVIGGRLLVNVVTGGDPVENKGDGVFLSHDERYEVTREFLNVYSDLLSGKTVNVAGKHITIEDGRLLFPPVQSPRPPLYFGGSSDAGIDVAADTVDKYLTWGEPPAQVAEKVNRVRAVAEQRGRKLSFGIRLHVIVRETNEAAWAAADDLIRYVTDDTIAAAQKVFARMDSVGQQRMSELHGGRRDKLEISPNLWAGVGLVRGGAGTALVGDPQTVAARIKEYQDVGIDTFILSGYPHLEEAYRFAELVFPLVKSLHAGNVTPLRANTGPFGETIANEHLPNAKQAVKP.

This sequence belongs to the SsuD family.

The catalysed reaction is an alkanesulfonate + FMNH2 + O2 = an aldehyde + FMN + sulfite + H2O + 2 H(+). Functionally, catalyzes the desulfonation of aliphatic sulfonates. The protein is Alkanesulfonate monooxygenase of Rhodopseudomonas palustris (strain TIE-1).